The sequence spans 480 residues: MSPQTETKAGVGFKAGVKDYKLTYYTPEYETKDTDILAAFRVTPQPGVPPEEAGAAVAAESSTGTWTTVWTDGLTSLDRYKGRCYHIEPVVGEQNQYIAYVAYPLDLFEEGSVTNMFTSIVGNVFGFKALRALRLEDLRIPPAYSKTFQGPPHGIQVERDKLNKYGRPLLGCTIKPKLGLSAKNYGRAVYECLRGGLDFTKDDENVNSQPFMRWRDRFLFCAEAIYKAQAETGEIKGHYLNATAGTCEEMMRRAQCARELGVPIVMHDYLTGGFTANTSLAIYCRNNGLLLHIHRAMHAVIDRQKNHGMHFRVLAKALRMSGGDHIHAGTVVGKLEGEREMTLGFVDLLRDDYIEKDRSRGIFFTQDWVSMPGVLPVASGGIHVWHMPALTEIFGDDSVLQFGGGTLGHPWGNAPGAVANRVALEACVQARNEGRDLARESTQIIREACKWSPELAAACEVWKEIKFEFEPVDKLDVKKN.

Positions 1–2 (MS) are excised as a propeptide. P3 carries the post-translational modification N-acetylproline. Residue K14 is modified to N6,N6,N6-trimethyllysine. Residues N123 and T173 each contribute to the substrate site. Catalysis depends on K175, which acts as the Proton acceptor. Position 177 (K177) interacts with substrate. Mg(2+) is bound by residues K201, D203, and E204. Position 201 is an N6-carboxylysine (K201). H294 functions as the Proton acceptor in the catalytic mechanism. Substrate contacts are provided by R295, H327, and S379.

This sequence belongs to the RuBisCO large chain family. Type I subfamily. Heterohexadecamer of 8 large chains and 8 small chains; disulfide-linked. The disulfide link is formed within the large subunit homodimers. Mg(2+) serves as cofactor. The disulfide bond which can form in the large chain dimeric partners within the hexadecamer appears to be associated with oxidative stress and protein turnover.

Its subcellular location is the plastid. It localises to the chloroplast. It carries out the reaction 2 (2R)-3-phosphoglycerate + 2 H(+) = D-ribulose 1,5-bisphosphate + CO2 + H2O. It catalyses the reaction D-ribulose 1,5-bisphosphate + O2 = 2-phosphoglycolate + (2R)-3-phosphoglycerate + 2 H(+). Functionally, ruBisCO catalyzes two reactions: the carboxylation of D-ribulose 1,5-bisphosphate, the primary event in carbon dioxide fixation, as well as the oxidative fragmentation of the pentose substrate in the photorespiration process. Both reactions occur simultaneously and in competition at the same active site. This chain is Ribulose bisphosphate carboxylase large chain, found in Acorus calamus var. americanus (American sweet flag).